Here is a 577-residue protein sequence, read N- to C-terminus: Phosphoethanolamine transferase EptC (577 aa).

Transmembrane regions (helical) follow at residues 17 to 37, 44 to 64, 69 to 89, 119 to 139, and 154 to 174; these read LGWA…IIYI, NGIR…FLFP, IIAA…LCYY, YFSL…VLLW, and VVSF…NTFI.

It belongs to the phosphoethanolamine transferase family. EptC/CptA subfamily.

The protein resides in the cell inner membrane. It participates in bacterial outer membrane biogenesis; LPS core biosynthesis. Catalyzes the addition of a phosphoethanolamine moiety to the outer membrane lipopolysaccharide core. Plays a role in the pathogenesis of E.coli meningitis. Required for invasion of E.coli K1 into brain microvascular endothelial cells (BMEC). Contributes to E.coli traversal across the blood-brain barrier. The chain is Phosphoethanolamine transferase EptC (eptC) from Escherichia coli O18:K1:H7 (strain RS218 / NMEC).